The chain runs to 943 residues: MSQDYKTTLNLPATEFPMRGDLPKREPGILARWEEQGLYQQLRDNAAGRPLFVLHDGPPYANGRIHLGHAVNKILKDIIVKSRYLAGFDAPYVPGWDCHGLPIEIAVEKKWGKVGTKLDAVEFRQKCREFAEEQINIQRVDFKRLGVTGDWDNPYKTLSFDFEANEIRALAKVVANGHLVRGAKPVYWCFDCGSALAEAEIEYQEKESPAIDVAYAARDAQAIGQAFGVSVPADVEVAVPIWTTTPWTLPASLAVSLGAEINYVLAEGPAHNGKRRWLVLAAALAERALQRYGVEAVVLHGEADGSALENQLLAHPFYPEREILVLNGEHVSDEDGTGAVHTAPGHGQEDYVVSQKYGLLDKYNAGQVTPIDGRGVYLESTPPAGDVVLAGQHLWKAQEAIVGVLRDNGALLAFHPIRHSYPHCWRHKTPVVFRATPQWFISMDKANLRNDALAAIDTVGWFPSWGKARIQSMVDGRPDWTISRQRTWGVPIALFTHRQTGEIHPRSVELMQQVADRVEAEGIDVWYSLDAAELLGAEAADYEKVTDILDVWFDSGVTHEGVLAARGFGKPADLYLEGSDQHRGWFQSSLLTGVAIDKRAPYKQCLTHGFTVDEHGRKMSKSLGNGIEPQDIMNKLGADILRLWIASADYSNEMSLSQEILKRNADAYRRLRNTARFLLGNLDGFDPAQHLQPLDQMVALDRWIVHRAWELQEKIKAAYDGYNMAEIVQLLLNFCSVDLGSLYLDVTKDRLYTMPTDSSGRRSAQSAMYHIAEAFTRWVAPILTFTADELWGYLPGERAEHVLFTTWYDGLAPLPADAQLNAADFDQLLAVREQVAKVLEPMRANGAIGAALEAEITIAASEEQAARWQPLADELRFLFISGDVQVRPATTDEVFVSAQPTTKAKCVRCWHHRADVGSNADHPELCGRCVSNITGAGEVRSWF.

The 'HIGH' region signature appears at 59 to 69; that stretch reads PYANGRIHLGH. E577 is an L-isoleucyl-5'-AMP binding site. The short motif at 618 to 622 is the 'KMSKS' region element; that stretch reads KMSKS. K621 serves as a coordination point for ATP. Zn(2+)-binding residues include C906, C909, C926, and C929.

The protein belongs to the class-I aminoacyl-tRNA synthetase family. IleS type 1 subfamily. In terms of assembly, monomer. Zn(2+) serves as cofactor.

It localises to the cytoplasm. The enzyme catalyses tRNA(Ile) + L-isoleucine + ATP = L-isoleucyl-tRNA(Ile) + AMP + diphosphate. Functionally, catalyzes the attachment of isoleucine to tRNA(Ile). As IleRS can inadvertently accommodate and process structurally similar amino acids such as valine, to avoid such errors it has two additional distinct tRNA(Ile)-dependent editing activities. One activity is designated as 'pretransfer' editing and involves the hydrolysis of activated Val-AMP. The other activity is designated 'posttransfer' editing and involves deacylation of mischarged Val-tRNA(Ile). This is Isoleucine--tRNA ligase from Stenotrophomonas maltophilia (strain R551-3).